The sequence spans 229 residues: Type III pantothenate kinase (229 aa).

Residue 7–14 (DVGNSSVD) participates in ATP binding. Substrate contacts are provided by residues Tyr-78 and 85–88 (GTDR). The active-site Proton acceptor is the Asp-87. An ATP-binding site is contributed by Thr-110. Residue Thr-161 coordinates substrate.

This sequence belongs to the type III pantothenate kinase family. In terms of assembly, homodimer. NH4(+) is required as a cofactor. The cofactor is K(+).

It localises to the cytoplasm. It catalyses the reaction (R)-pantothenate + ATP = (R)-4'-phosphopantothenate + ADP + H(+). Its pathway is cofactor biosynthesis; coenzyme A biosynthesis; CoA from (R)-pantothenate: step 1/5. Catalyzes the phosphorylation of pantothenate (Pan), the first step in CoA biosynthesis. In Aquifex aeolicus (strain VF5), this protein is Type III pantothenate kinase.